A 355-amino-acid polypeptide reads, in one-letter code: C-C chemokine receptor type 3 (355 aa).

Over 1–34 (MTTSLDTVETFGPTSYDDDMGLLCEKADVGALIA) the chain is Extracellular. A helical membrane pass occupies residues 35 to 62 (QFVPPLYSLVFMVGLLGNVVVVMILIKY). Over 63–72 (RRLRIMTNIY) the chain is Cytoplasmic. Residues 73–93 (LLNLAISDLLFLFTLPFWIHY) form a helical membrane-spanning segment. The Extracellular portion of the chain corresponds to 94–107 (VRERNWVFSHGMCK). Cys106 and Cys183 are joined by a disulfide. The helical transmembrane segment at 108–129 (VLSGFYHTGLYSEIFFIILLTI) threads the bilayer. The Cytoplasmic segment spans residues 130-146 (DRYLAIVHAVFALRART). The chain crosses the membrane as a helical span at residues 147 to 171 (VTFGVITSIVTWGLAVLAALPEFIF). The Extracellular portion of the chain corresponds to 172–203 (YGTEKLFPKTLCSAIYPQDTVYSWRHFHTLKM). The chain crosses the membrane as a helical span at residues 204-223 (TILCLALPLLVMAICYTGII). Over 224–239 (KTLLRCPSKKKYKAIR) the chain is Cytoplasmic. The helical transmembrane segment at 240 to 264 (LIFVIMAVFFIFWTPYNVAILISTY) threads the bilayer. The Extracellular segment spans residues 265–281 (QSVLFGLDCERSKHLDL). A helical membrane pass occupies residues 282-305 (FVLATEVIAYSHCCVNPVIYAFVG). Over 306–355 (ERFRKYLRHFFHRHVLMHLGKYIPFLPSEKLERTSSVSPSTAEPELSIVF) the chain is Cytoplasmic.

The protein belongs to the G-protein coupled receptor 1 family.

Its subcellular location is the cell membrane. Functionally, receptor for C-C type chemokine. Binds and responds to a variety of chemokines, including CCL11, CCL26, CCL7, CCL13, RANTES(CCL5) and CCL15. Subsequently transduces a signal by increasing the intracellular calcium ions level. In addition acts as a possible functional receptor for NARS1. In Macaca mulatta (Rhesus macaque), this protein is C-C chemokine receptor type 3 (CCR3).